Reading from the N-terminus, the 665-residue chain is Probable protein transport Sec1a (665 aa).

The disordered stretch occupies residues 543–594 (PSPSFRGIPSASTQTSPAHQPAQSMRSRRTGGTWARPRDSDDGYSSDSVLKH). Polar residues-rich tracts occupy residues 552–567 (SASTQTSPAHQPAQSM) and 585–594 (GYSSDSVLKH).

Belongs to the STXBP/unc-18/SEC1 family.

Functionally, involved in the vesicle trafficking. Binds syntaxins. The sequence is that of Probable protein transport Sec1a from Oryza sativa subsp. japonica (Rice).